The sequence spans 1500 residues: Rho GTPase-activating protein 35 (1500 aa).

Positions 1–266 (MMMARKQDVR…IPYFEALKQQ (266 aa)) are has GTPase activity, required for proper localization. Residues lysine 28, 33–37 (IGKSC), leucine 52, serine 56, 95–97 (EQT), 201–203 (KCD), and 229–231 (SAR) each bind GTP. FF domains are found at residues 270–327 (IATA…HIHR), 368–422 (KLLE…HLEK), 429–483 (RAEM…HQKQ), and 485–550 (IDKA…HIHF). The residue at position 308 (tyrosine 308) is a Phosphotyrosine. The residue at position 589 (serine 589) is a Phosphoserine. In terms of domain architecture, pG1 pseudoGTPase spans 592-767 (DPNIDRINLV…LLDSKRNLNL (176 aa)). 2 positions are modified to phosphoserine: serine 770 and serine 773. One can recognise a pG2 pseudoGTPase domain in the interval 783–947 (RIVMCLMCGD…FKDVVDKKNI (165 aa)). Phosphoserine is present on residues serine 970, serine 975, serine 985, serine 1002, and serine 1073. The disordered stretch occupies residues 970–989 (SPRAGSPLCNSNLQDSEEDI). The interval 1058–1090 (SYLDQGHRDGQRKSVSSSTWLPPDGFDPSDYAE) is disordered. Tyrosine 1088 is modified (phosphotyrosine). A Phosphotyrosine; by ABL2 and PTK6 modification is found at tyrosine 1106. Residues 1125-1142 (KAQSNGSGNGSDSEMDTS) are compositionally biased toward polar residues. Residues 1125-1147 (KAQSNGSGNGSDSEMDTSSLERG) form a disordered region. 6 positions are modified to phosphoserine: serine 1135, serine 1143, serine 1151, serine 1177, serine 1180, and serine 1222. The tract at residues 1178–1208 (VGSDDELGPIRKKEEDQASQGYKGDNAVIPY) is disordered. The interval 1214–1237 (PRRRNILRSLRRNTKKPKPKPRPS) is required for phospholipid binding and regulation of the substrate preference. A Phosphothreonine modification is found at threonine 1227. The residue at position 1237 (serine 1237) is a Phosphoserine. The region spanning 1250-1437 (VPLTTVVTPE…LFIQQCPFFF (188 aa)) is the Rho-GAP domain. The interval 1444–1500 (EPPGATPSSPSAVASTVPFLTSTPVTSQPSPPQSPPPTPQSPMQALLPSQLQAEHTL) is disordered. Residues 1449-1471 (TPSSPSAVASTVPFLTSTPVTSQ) are compositionally biased toward low complexity. The span at 1472–1483 (PSPPQSPPPTPQ) shows a compositional bias: pro residues. Phosphoserine occurs at positions 1473 and 1477. Threonine 1481 is modified (phosphothreonine). Serine 1484 carries the post-translational modification Phosphoserine. Residues 1490-1500 (LPSQLQAEHTL) are compositionally biased toward polar residues.

In terms of assembly, interacts with RASA1. Interacts with the general transcription factor GTF2I, the interaction sequesters GTF2I in the cytoplasm. In terms of processing, phosphorylation of Tyr-1106 by PTK6 promotes the association with RASA1, inactivating RHOA while activating RAS. Phosphorylation at Tyr-308 by PDGFRA inhibits binding to GTF2I. Phosphorylated by PRKCA at Ser-1222 and Thr-1227, induces relocalization from the cytoplasm to regions of plasma membrane ruffling and prevents the binding and substrate specificity regulation by phospholipids. In brain, phosphorylated by FYN and SRC. During focal adhesion formation, phosphorylated by MAPK1 and MAPK3 at the C-terminal region, probably at Ser-1452, Ser-1477, Thr-1481 and Ser-1484. Phosphorylation by MAPK1 and MAPK3 inhibits GAP function and localizes ARGHAP35 away from newly forming focal adhesions and stress fibers in cells spreading on fibronectin. Phosphorylation at Ser-1477 and Thr-1481 by GSK3B requires priming by MAPK and inhibits RhoGAP activity and modulates polarized cell migration. Strongly expressed in retina (photoreceptor layer) and brain. Expression is maximal in the occipital, frontal, temporal lobe and also the cerebellum. Medium expression in the medulla and also in kidney, lung, liver, heart and spleen.

It localises to the cytoplasm. Its subcellular location is the cytoskeleton. It is found in the cilium basal body. The protein localises to the nucleus. The protein resides in the cell membrane. In terms of biological role, rho GTPase-activating protein (GAP). Binds several acidic phospholipids which inhibits the Rho GAP activity to promote the Rac GAP activity. This binding is inhibited by phosphorylation by PRKCA. Involved in cell differentiation as well as cell adhesion and migration, plays an important role in retinal tissue morphogenesis, neural tube fusion, midline fusion of the cerebral hemispheres and mammary gland branching morphogenesis. Transduces signals from p21-ras to the nucleus, acting via the ras GTPase-activating protein (GAP). Transduces SRC-dependent signals from cell-surface adhesion molecules, such as laminin, to promote neurite outgrowth. Regulates axon outgrowth, guidance and fasciculation. Modulates Rho GTPase-dependent F-actin polymerization, organization and assembly, is involved in polarized cell migration and in the positive regulation of ciliogenesis and cilia elongation. During mammary gland development, is required in both the epithelial and stromal compartments for ductal outgrowth. Represses transcription of the glucocorticoid receptor by binding to the cis-acting regulatory sequence 5'-GAGAAAAGAAACTGGAGAAACTC-3'; this function is however unclear and would need additional experimental evidences. In Canis lupus familiaris (Dog), this protein is Rho GTPase-activating protein 35.